The following is a 475-amino-acid chain: Ribulose bisphosphate carboxylase large chain (475 aa).

Positions 1-2 are excised as a propeptide; it reads MS. At Pro-3 the chain carries N-acetylproline. Lys-14 is subject to N6,N6,N6-trimethyllysine. Asn-123 and Thr-173 together coordinate substrate. The active-site Proton acceptor is the Lys-175. Lys-177 is a substrate binding site. Residues Lys-201, Asp-203, and Glu-204 each contribute to the Mg(2+) site. Lys-201 is subject to N6-carboxylysine. The Proton acceptor role is filled by His-294. Residues Arg-295, His-327, and Ser-379 each contribute to the substrate site.

This sequence belongs to the RuBisCO large chain family. Type I subfamily. As to quaternary structure, heterohexadecamer of 8 large chains and 8 small chains; disulfide-linked. The disulfide link is formed within the large subunit homodimers. Requires Mg(2+) as cofactor. In terms of processing, the disulfide bond which can form in the large chain dimeric partners within the hexadecamer appears to be associated with oxidative stress and protein turnover.

It is found in the plastid. It localises to the chloroplast. The enzyme catalyses 2 (2R)-3-phosphoglycerate + 2 H(+) = D-ribulose 1,5-bisphosphate + CO2 + H2O. The catalysed reaction is D-ribulose 1,5-bisphosphate + O2 = 2-phosphoglycolate + (2R)-3-phosphoglycerate + 2 H(+). Functionally, ruBisCO catalyzes two reactions: the carboxylation of D-ribulose 1,5-bisphosphate, the primary event in carbon dioxide fixation, as well as the oxidative fragmentation of the pentose substrate in the photorespiration process. Both reactions occur simultaneously and in competition at the same active site. The protein is Ribulose bisphosphate carboxylase large chain of Quercus rubra (Northern red oak).